The following is an 896-amino-acid chain: UPF0182 protein GM21_2279 (896 aa).

7 consecutive transmembrane segments (helical) span residues 6-26 (MTFI…LLSF), 46-66 (VYAQ…FLQL), 99-119 (LVRP…GNWG), 158-180 (LLKS…AYYV), 201-221 (LAVL…LESF), 245-265 (TLRI…LGIW), and 271-291 (LALG…RVYP).

This sequence belongs to the UPF0182 family.

The protein resides in the cell membrane. This Geobacter sp. (strain M21) protein is UPF0182 protein GM21_2279.